A 413-amino-acid polypeptide reads, in one-letter code: Multifunctional CCA protein (413 aa).

ATP-binding residues include glycine 8 and arginine 11. 2 residues coordinate CTP: glycine 8 and arginine 11. Residues aspartate 21 and aspartate 23 each contribute to the Mg(2+) site. Residues arginine 91, arginine 137, and arginine 140 each contribute to the ATP site. Residues arginine 91, arginine 137, and arginine 140 each coordinate CTP. The HD domain maps to 228–329 (TGLHTLMTVT…VKLFDSIDAW (102 aa)).

The protein belongs to the tRNA nucleotidyltransferase/poly(A) polymerase family. Bacterial CCA-adding enzyme type 1 subfamily. Monomer. Can also form homodimers and oligomers. The cofactor is Mg(2+). Ni(2+) is required as a cofactor.

It carries out the reaction a tRNA precursor + 2 CTP + ATP = a tRNA with a 3' CCA end + 3 diphosphate. The catalysed reaction is a tRNA with a 3' CCA end + 2 CTP + ATP = a tRNA with a 3' CCACCA end + 3 diphosphate. Catalyzes the addition and repair of the essential 3'-terminal CCA sequence in tRNAs without using a nucleic acid template. Adds these three nucleotides in the order of C, C, and A to the tRNA nucleotide-73, using CTP and ATP as substrates and producing inorganic pyrophosphate. tRNA 3'-terminal CCA addition is required both for tRNA processing and repair. Also involved in tRNA surveillance by mediating tandem CCA addition to generate a CCACCA at the 3' terminus of unstable tRNAs. While stable tRNAs receive only 3'-terminal CCA, unstable tRNAs are marked with CCACCA and rapidly degraded. This chain is Multifunctional CCA protein, found in Klebsiella pneumoniae (strain 342).